The primary structure comprises 206 residues: Ribosomal RNA small subunit methyltransferase G (206 aa).

S-adenosyl-L-methionine-binding positions include Gly-73, Leu-78, 124-125 (VE), and Arg-139.

Belongs to the methyltransferase superfamily. RNA methyltransferase RsmG family.

The protein localises to the cytoplasm. It carries out the reaction guanosine(527) in 16S rRNA + S-adenosyl-L-methionine = N(7)-methylguanosine(527) in 16S rRNA + S-adenosyl-L-homocysteine. Functionally, specifically methylates the N7 position of guanine in position 527 of 16S rRNA. This is Ribosomal RNA small subunit methyltransferase G from Yersinia pseudotuberculosis serotype O:3 (strain YPIII).